An 81-amino-acid polypeptide reads, in one-letter code: Adipogenin (81 aa).

The chain crosses the membrane as a helical span at residues 16–36 (FLASWLCLPVGLLLFLLIVWL).

The protein belongs to the adipogenin family.

The protein localises to the membrane. It is found in the nucleus. Plays a role in stimulating adipocyte differentiation and development. This Sus scrofa (Pig) protein is Adipogenin.